The following is a 75-amino-acid chain: Small ribosomal subunit protein bS18 (75 aa).

The protein belongs to the bacterial ribosomal protein bS18 family. Part of the 30S ribosomal subunit. Forms a tight heterodimer with protein bS6.

In terms of biological role, binds as a heterodimer with protein bS6 to the central domain of the 16S rRNA, where it helps stabilize the platform of the 30S subunit. In Ruegeria sp. (strain TM1040) (Silicibacter sp.), this protein is Small ribosomal subunit protein bS18.